The chain runs to 606 residues: MNMFSSLMLASLSVLTLPIMSSILNTHKNSTYPHHVKNIISYAFITSLIPTMMFIHSGQETIISNWHWMTIQTLKLSLSFKLDYFSMIFVPVALFVTWSIMEFSLWYMHSDPYITRFFKYLLTFLITMMILVTANNLFQLFIGWEGVGIMSFLLIGWWYGRTDANTAALQAILYNRIGDIGFIMAMAWFLFNTNTWDLQQIFMLDPNLTNLPLLGLLLAATGKSAQFGLHPWLPSAMEGPTPVSALLHSSTMVVAGVFLLIRFHPLMENNKTIQSLTLCLGAITTLFTAICALTQNDIKKIIAFSTSSQLGLMIVTIGINQPYLAFLHICTHAFFKAMLFMCSGSIIHSLNDEQDIRKTGGLFNAMPFTTTSLIIGSLALTGMPFLTGFYSKDLIIETANTSYTNAWALLMTLIATSLTAVYSTRIIFFALLGQPRFLPLTTINENNPFLINSIKRLLIGSIFAGFFISNNIYPTTIPEMTMPIYMKLTALTVTILGFTLALELSLITHNLKLEHPTNMFKFSNLLGYYPTIMHRLPPLANLSMSQKSASLLLDSIWLENILPKSISQFQMKTSILISTQKGQIKLYFLSFLITLTLSMLLFNLHE.

16 helical membrane-spanning segments follow: residues 4-24 (FSSL…SSIL), 38-58 (NIIS…IHSG), 87-107 (MIFV…SLWY), 117-137 (FFKY…ANNL), 140-160 (LFIG…WWYG), 171-191 (AILY…WFLF), 211-233 (LPLL…HPWL), 241-261 (TPVS…FLLI), 273-293 (IQSL…ICAL), 301-320 (IIAF…IGIN), 325-347 (AFLH…GSII), 366-386 (MPFT…MPFL), 413-433 (LIAT…ALLG), 457-477 (LLIG…PTTI), 488-508 (LTAL…SLIT), and 584-604 (IKLY…LFNL).

Belongs to the complex I subunit 5 family. Core subunit of respiratory chain NADH dehydrogenase (Complex I) which is composed of 45 different subunits.

The protein localises to the mitochondrion inner membrane. It catalyses the reaction a ubiquinone + NADH + 5 H(+)(in) = a ubiquinol + NAD(+) + 4 H(+)(out). Functionally, core subunit of the mitochondrial membrane respiratory chain NADH dehydrogenase (Complex I) which catalyzes electron transfer from NADH through the respiratory chain, using ubiquinone as an electron acceptor. Essential for the catalytic activity and assembly of complex I. This is NADH-ubiquinone oxidoreductase chain 5 (MT-ND5) from Equus asinus (Donkey).